We begin with the raw amino-acid sequence, 279 residues long: Urease accessory protein UreD (279 aa).

This sequence belongs to the UreD family. As to quaternary structure, ureD, UreF and UreG form a complex that acts as a GTP-hydrolysis-dependent molecular chaperone, activating the urease apoprotein by helping to assemble the nickel containing metallocenter of UreC. The UreE protein probably delivers the nickel.

Its subcellular location is the cytoplasm. In terms of biological role, required for maturation of urease via the functional incorporation of the urease nickel metallocenter. This chain is Urease accessory protein UreD, found in Nitrosospira multiformis (strain ATCC 25196 / NCIMB 11849 / C 71).